The following is a 222-amino-acid chain: MAPLKLYGMPLSPNVVRVATVLNEKGLDFEIVPVDLTTGAHKQPDFLALNPFGQIPALVDGDEVLFESRAINRYIASKYASEGTDLLPATASAAKLEVWLEVESHHFHPNASPLVFQLLVRPLLGGAPDAAVVEKHAEQLAKVLDVYEAHLARNKYLAGDEFTLADANHALLPALTSARPPRPGCVAARPHVKAWWEAIAARPAFQKTVAAIPLPPPPSSSA.

The GST N-terminal domain occupies 2-83; sequence APLKLYGMPL…YIASKYASEG (82 aa). Glutathione contacts are provided by residues Ser12, 13–14, 41–42, 54–55, and 67–68; these read PN, HK, QI, and ES. Residues 89–219 enclose the GST C-terminal domain; sequence ATASAAKLEV…AAIPLPPPPS (131 aa).

This sequence belongs to the GST superfamily. Phi family. Homodimer.

It carries out the reaction RX + glutathione = an S-substituted glutathione + a halide anion + H(+). Its function is as follows. Conjugation of reduced glutathione to a wide number of exogenous and endogenous hydrophobic electrophiles. Involved in the detoxification of certain herbicides. This chain is Glutathione S-transferase 3, found in Zea mays (Maize).